The primary structure comprises 400 residues: Probable tRNA sulfurtransferase (400 aa).

Residues 60 to 164 (EPIIEKLKNV…KEATYITSGT (105 aa)) form the THUMP domain. ATP-binding positions include 182–183 (LL), 207–208 (HF), Arg-264, Gly-286, and Gln-295.

The protein belongs to the ThiI family.

The protein localises to the cytoplasm. It carries out the reaction [ThiI sulfur-carrier protein]-S-sulfanyl-L-cysteine + a uridine in tRNA + 2 reduced [2Fe-2S]-[ferredoxin] + ATP + H(+) = [ThiI sulfur-carrier protein]-L-cysteine + a 4-thiouridine in tRNA + 2 oxidized [2Fe-2S]-[ferredoxin] + AMP + diphosphate. The enzyme catalyses [ThiS sulfur-carrier protein]-C-terminal Gly-Gly-AMP + S-sulfanyl-L-cysteinyl-[cysteine desulfurase] + AH2 = [ThiS sulfur-carrier protein]-C-terminal-Gly-aminoethanethioate + L-cysteinyl-[cysteine desulfurase] + A + AMP + 2 H(+). Its pathway is cofactor biosynthesis; thiamine diphosphate biosynthesis. Functionally, catalyzes the ATP-dependent transfer of a sulfur to tRNA to produce 4-thiouridine in position 8 of tRNAs, which functions as a near-UV photosensor. Also catalyzes the transfer of sulfur to the sulfur carrier protein ThiS, forming ThiS-thiocarboxylate. This is a step in the synthesis of thiazole, in the thiamine biosynthesis pathway. The sulfur is donated as persulfide by IscS. In Oceanobacillus iheyensis (strain DSM 14371 / CIP 107618 / JCM 11309 / KCTC 3954 / HTE831), this protein is Probable tRNA sulfurtransferase.